Here is a 152-residue protein sequence, read N- to C-terminus: FNPCPYSDDTVKMIILTEQNKKQDFYTLDTIGEHNQFNKLTAKSQVVFIVWQTGIGDAITARAGYIFLLDSGLAMLVDKYQMAPVASDIKLCNAGCYCKPTYVISVKKAIQFAWEHKCVGIRCSDPGVPTDGLSGRPHYGETLHKVRSYNGK.

In terms of tissue distribution, expressed by the venom gland.

It is found in the secreted. It catalyses the reaction a 1-acyl-sn-glycero-3-phosphocholine + H2O = sn-glycerol 3-phosphocholine + a fatty acid + H(+). Its function is as follows. Neurotoxin of presynaptic effect which degrades lysophospholipids. This Vespa orientalis (Oriental hornet) protein is Orientotoxin-1.